Reading from the N-terminus, the 423-residue chain is MPRSFLVKSKKAHSYHQPRSPGPDYSLRLETVPAPGRAEGGAVSAGESKMEPRERLSPDSQLTEAPDRASASPNSCEGSVCDPCSEFEDFWRPPSPSVSPASEKSLCRSLDEAQPYTLPFKPYAWSGLAGSDLRHLVQSYRQCSALERSAGLSLFCERGSEPGRPAARYGPEQAAGGAGAGQPGRCGVAGGATSAAGLGLYGDFAPAAAGLYERPSTAAGRLYQDHGHELHADKSVGVKVESELLCTRLLLGGGSYKCIKCSKVFSTPHGLEVHVRRSHSGTRPFACEMCGKTFGHAVSLEQHKAVHSQERSFDCKICGKSFKRSSTLSTHLLIHSDTRPYPCQYCGKRFHQKSDMKKHTFIHTGEKPHKCQVCGKAFSQSSNLITHSRKHTGFKPFGCDLCGKGFQRKVDLRRHRETQHGLK.

Positions 1–20 are SNAG domain; sequence MPRSFLVKSKKAHSYHQPRS. The disordered stretch occupies residues 1–76; it reads MPRSFLVKSK…DRASASPNSC (76 aa). Phosphoserine occurs at positions 20 and 57. A compositionally biased stretch (basic and acidic residues) spans 48-57; that stretch reads SKMEPRERLS. Positions 141 to 258 are required for interaction with RELA; that stretch reads RQCSALERSA…LLLGGGSYKC (118 aa). C2H2-type zinc fingers lie at residues 256 to 279, 285 to 307, 313 to 335, 341 to 363, 369 to 391, and 397 to 420; these read YKCI…RRSH, FACE…KAVH, FDCK…LLIH, YPCQ…TFIH, HKCQ…SRKH, and FGCD…ETQH.

As to quaternary structure, interacts (via the zinc-finger domain) with ARIH2; the interaction prevents GFI1 ubiquitination and proteasomal degradation. Forms a complex with EHMT2 and HDAC1 to promote 'Lys-9' dimethylation of H3 (H3K9Me2) and repress expression of target genes. Interacts directly with EHMT2. Interacts with RUNX1T1; the interaction represses HDAC-mediated transcriptional activity. Interacts (via the C-terminal zinc fingers) with ZBTB17; the interaction results in the recruitment of GFI1 to the CDKN1A/p21 and CDKNIB promoters and repression of transcription. Interacts with U2AF1L4. Component of RCOR-GFI-KDM1A-HDAC complexes. Interacts directly with RCOR1, KDM1A and HDAC2. Also interacts with HDAC1. Component of the GFI1-AJUBA-HDAC1 repressor complex. Interacts directly with AJUBA (via its LIM domains); the interaction results in the HDAC-dependent corepression of a subset of GFI1 target genes and, occurs independently of the SNAG domain. Interacts with SPI1; the interaction inhibits SPI1 transcriptional activity targeted at macrophage-specific genes, repressing macrophage differentiation of myeloid progenitor cells and promoting granulocyte commitment. Interacts with PIAS3; the interaction relieves the inhibitory effect of PIAS3 on STAT3-mediated transcriptional activity. Interacts with RELA; the interaction occurs on liposaccharide (LPS) stimulation and controls RELA DNA binding activity and regulates endotoxin-mediated TOLL-like receptor inflammatory response. In terms of processing, ubiquitinated.

It is found in the nucleus. Transcription repressor essential for hematopoiesis. Functions in a cell-context and development-specific manner. Binds to 5'-TAAATCAC[AT]GCA-3' in the promoter region of a large number of genes. Component of several complexes, including the EHMT2-GFI1-HDAC1, AJUBA-GFI1-HDAC1 and RCOR-GFI-KDM1A-HDAC complexes, that suppress, via histone deacetylase (HDAC) recruitment, a number of genes implicated in multilineage blood cell development. Regulates neutrophil differentiation, promotes proliferation of lymphoid cells, and is required for granulocyte development. Inhibits SPI1 transcriptional activity at macrophage-specific genes, repressing macrophage differentiation of myeloid progenitor cells and promoting granulocyte commitment. Mediates, together with U2AF1L4, the alternative splicing of CD45 and controls T-cell receptor signaling. Regulates the endotoxin-mediated Toll-like receptor (TLR) inflammatory response by antagonizing RELA. Cooperates with CBFA2T2 to regulate ITGB1-dependent neurite growth. Controls cell-cycle progression by repressing CDKNIA/p21 transcription in response to TGFB1 via recruitment of GFI1 by ZBTB17 to the CDKNIA/p21 and CDKNIB promoters. Required for the maintenance of inner ear hair cells. In addition to its role in transcription, acts as a substrate adapter for PRMT1 in the DNA damage response. Facilitates the recognition of TP53BP1 and MRE11 substrates by PRMT1, promoting their methylation and the DNA damage response. The sequence is that of Zinc finger protein Gfi-1 (Gfi1) from Mus musculus (Mouse).